The chain runs to 408 residues: S-adenosylmethionine sensor upstream of mTORC1 (408 aa).

A compositionally biased stretch (low complexity) spans 1–16; the sequence is MEAAPRSRPRPGGAAA. A disordered region spans residues 1–37; that stretch reads MEAAPRSRPRPGGAAASPPPPPPPPPPEQERKLEQEK. The segment covering 17–27 has biased composition (pro residues); sequence SPPPPPPPPPP. The span at 28–37 shows a compositional bias: basic and acidic residues; that stretch reads EQERKLEQEK. S-adenosyl-L-methionine-binding residues include R97, G175, D193, D205, F206, and S247.

This sequence belongs to the BMT2/SAMTOR family. Interacts with the GATOR1 complex; interaction is disrupted when SAMTOR binds S-adenosyl-L-methionine. Interacts with the KICSTOR complex; interaction is disrupted when SAMTOR binds S-adenosyl-L-methionine.

S-adenosyl-L-methionine-binding protein that acts as an inhibitor of mTORC1 signaling via interaction with the GATOR1 and KICSTOR complexes. Acts as a sensor of S-adenosyl-L-methionine to signal methionine sufficiency to mTORC1: in presence of methionine, binds S-adenosyl-L-methionine, leading to disrupt interaction with the GATOR1 and KICSTOR complexes and promote mTORC1 signaling. Upon methionine starvation, S-adenosyl-L-methionine levels are reduced, thereby promoting the association with GATOR1 and KICSTOR, leading to inhibit mTORC1 signaling. Probably also acts as a S-adenosyl-L-methionine-dependent methyltransferase. The protein is S-adenosylmethionine sensor upstream of mTORC1 of Gallus gallus (Chicken).